We begin with the raw amino-acid sequence, 376 residues long: Probable ureide permease A3 (376 aa).

Residues 1–9 (HLVESKGGA) lie on the Extracellular side of the membrane. Residues 10-30 (IACMFLALFFLGTWPALLTML) form a helical membrane-spanning segment. At 31-41 (ERRGRLPQHTY) the chain is on the cytoplasmic side. A helical membrane pass occupies residues 42–62 (LDYSITNFFAALLIAFTFGEI). Topologically, residues 63-80 (GKGKPDEPNFLAQLAQDN) are extracellular. The chain crosses the membrane as a helical span at residues 81–101 (WPSVLFAMGGGVVLSLGNLSS). Topologically, residues 102–103 (QY) are cytoplasmic. The helical transmembrane segment at 104–124 (AFAFVGLSVTEVITASITVVI) threads the bilayer. Over 125–137 (GTTLNYFLDDKIN) the chain is Extracellular. A helical transmembrane segment spans residues 138–158 (KAEILFPGVGCFLIAVFLGFC). The Cytoplasmic portion of the chain corresponds to 159-231 (RFNSSNASDN…RAIKVFGKST (73 aa)). 223–230 (AIKVFGKS) provides a ligand contact to ATP. The helical transmembrane segment at 232–252 (LIGLALTFSAGLCFSMFSPAF) threads the bilayer. Residues 253 to 274 (NLATNDQWHTLPNGIPHLTVYT) lie on the Extracellular side of the membrane. Residues 275–295 (AFFYFSISCFVIAIILNITFL) traverse the membrane as a helical segment. At 296 to 317 (YHPVLNLPKSSLKAYLADSDGR) the chain is on the cytoplasmic side. Residues 318–338 (IWALLAGLLCGFGNSLQFMGG) traverse the membrane as a helical segment. Residues 339-376 (QAAGYQQQSLCRHFLCKHFWGVLLFGEYRRSSRKTYIC) are Extracellular-facing.

This sequence belongs to the plant ureide permease (TC 2.A.7.19) family.

Its subcellular location is the membrane. Its function is as follows. Transports a wide spectrum of oxo derivatives of heterocyclic nitrogen compounds. The polypeptide is Probable ureide permease A3 (A3) (Vigna unguiculata (Cowpea)).